A 121-amino-acid chain; its full sequence is Flagellar protein FliT (121 aa).

Residues 1–50 (MNHAPHLYFAWQQLVEKSQLMLRLATEEQWDELIASEMAYVNAVQEIAHL) are required for homodimerization. The interval 60 to 98 (MQEQLRPMLRLILDNESKVKQLLQIRMDELAKLVGQSSV) is fliD binding.

This sequence belongs to the FliT family. As to quaternary structure, homodimer. Interacts with FliD and FlhC.

The protein resides in the cytoplasm. It is found in the cytosol. Its function is as follows. Dual-function protein that regulates the transcription of class 2 flagellar operons and that also acts as an export chaperone for the filament-capping protein FliD. As a transcriptional regulator, acts as an anti-FlhDC factor; it directly binds FlhC, thus inhibiting the binding of the FlhC/FlhD complex to class 2 promoters, resulting in decreased expression of class 2 flagellar operons. As a chaperone, effects FliD transition to the membrane by preventing its premature polymerization, and by directing it to the export apparatus. This chain is Flagellar protein FliT, found in Escherichia coli O139:H28 (strain E24377A / ETEC).